The chain runs to 409 residues: Methylthioribose-1-phosphate isomerase (409 aa).

The active-site Proton donor is the Asp-277.

The protein belongs to the eIF-2B alpha/beta/delta subunits family. MtnA subfamily.

Its subcellular location is the cytoplasm. It is found in the nucleus. It carries out the reaction 5-(methylsulfanyl)-alpha-D-ribose 1-phosphate = 5-(methylsulfanyl)-D-ribulose 1-phosphate. It functions in the pathway amino-acid biosynthesis; L-methionine biosynthesis via salvage pathway; L-methionine from S-methyl-5-thio-alpha-D-ribose 1-phosphate: step 1/6. Its function is as follows. Catalyzes the interconversion of methylthioribose-1-phosphate (MTR-1-P) into methylthioribulose-1-phosphate (MTRu-1-P). The polypeptide is Methylthioribose-1-phosphate isomerase (Scheffersomyces stipitis (strain ATCC 58785 / CBS 6054 / NBRC 10063 / NRRL Y-11545) (Yeast)).